A 122-amino-acid polypeptide reads, in one-letter code: NADPH-dependent 7-cyano-7-deazaguanine reductase (122 aa).

The Thioimide intermediate role is filled by Cys34. Asp41 acts as the Proton donor in catalysis. Residues 56 to 58 (VEL) and 75 to 76 (HE) each bind substrate.

Belongs to the GTP cyclohydrolase I family. QueF type 1 subfamily.

The protein resides in the cytoplasm. It catalyses the reaction 7-aminomethyl-7-carbaguanine + 2 NADP(+) = 7-cyano-7-deazaguanine + 2 NADPH + 3 H(+). It functions in the pathway tRNA modification; tRNA-queuosine biosynthesis. Its function is as follows. Catalyzes the NADPH-dependent reduction of 7-cyano-7-deazaguanine (preQ0) to 7-aminomethyl-7-deazaguanine (preQ1). The protein is NADPH-dependent 7-cyano-7-deazaguanine reductase of Anaeromyxobacter dehalogenans (strain 2CP-1 / ATCC BAA-258).